A 230-amino-acid polypeptide reads, in one-letter code: 7-cyano-7-deazaguanine synthase (230 aa).

Residue 16 to 26 (LSGGLDSMVSG) coordinates ATP. Positions 195, 205, 208, and 211 each coordinate Zn(2+).

The protein belongs to the QueC family. Zn(2+) is required as a cofactor.

The enzyme catalyses 7-carboxy-7-deazaguanine + NH4(+) + ATP = 7-cyano-7-deazaguanine + ADP + phosphate + H2O + H(+). Its pathway is purine metabolism; 7-cyano-7-deazaguanine biosynthesis. In terms of biological role, catalyzes the ATP-dependent conversion of 7-carboxy-7-deazaguanine (CDG) to 7-cyano-7-deazaguanine (preQ(0)). The protein is 7-cyano-7-deazaguanine synthase of Rhizorhabdus wittichii (strain DSM 6014 / CCUG 31198 / JCM 15750 / NBRC 105917 / EY 4224 / RW1) (Sphingomonas wittichii).